Consider the following 240-residue polypeptide: uncharacterized protein (240 aa).

Residues 93–160 (QEASGCTVGE…AGGGAAASGQ (68 aa)) form a disordered region. Low complexity-rich tracts occupy residues 110-119 (AQPSQPAQGG) and 129-150 (GGAEEAGGAQASQPAESAPAEN).

This is an uncharacterized protein from Streptomyces viridochromogenes.